Consider the following 269-residue polypeptide: UPF0162 protein BU173 (269 aa).

This sequence belongs to the UPF0162 family.

The sequence is that of UPF0162 protein BU173 from Buchnera aphidicola subsp. Acyrthosiphon pisum (strain APS) (Acyrthosiphon pisum symbiotic bacterium).